The chain runs to 251 residues: Cytochrome c oxidase subunit 2 (251 aa).

Helical transmembrane passes span 42–62 (NIMF…FTIV) and 83–103 (IIWT…SFIL). H186, C221, E223, C225, H229, and M232 together coordinate Cu cation. E223 contributes to the Mg(2+) binding site.

This sequence belongs to the cytochrome c oxidase subunit 2 family. In terms of assembly, component of the cytochrome c oxidase (complex IV, CIV), a multisubunit enzyme composed of a catalytic core of 3 subunits and several supernumerary subunits. The complex exists as a monomer or a dimer and forms supercomplexes (SCs) in the inner mitochondrial membrane with ubiquinol-cytochrome c oxidoreductase (cytochrome b-c1 complex, complex III, CIII). It depends on Cu cation as a cofactor.

It is found in the mitochondrion inner membrane. It catalyses the reaction 4 Fe(II)-[cytochrome c] + O2 + 8 H(+)(in) = 4 Fe(III)-[cytochrome c] + 2 H2O + 4 H(+)(out). Functionally, component of the cytochrome c oxidase, the last enzyme in the mitochondrial electron transport chain which drives oxidative phosphorylation. The respiratory chain contains 3 multisubunit complexes succinate dehydrogenase (complex II, CII), ubiquinol-cytochrome c oxidoreductase (cytochrome b-c1 complex, complex III, CIII) and cytochrome c oxidase (complex IV, CIV), that cooperate to transfer electrons derived from NADH and succinate to molecular oxygen, creating an electrochemical gradient over the inner membrane that drives transmembrane transport and the ATP synthase. Cytochrome c oxidase is the component of the respiratory chain that catalyzes the reduction of oxygen to water. Electrons originating from reduced cytochrome c in the intermembrane space (IMS) are transferred via the dinuclear copper A center (CU(A)) of subunit 2 and heme A of subunit 1 to the active site in subunit 1, a binuclear center (BNC) formed by heme A3 and copper B (CU(B)). The BNC reduces molecular oxygen to 2 water molecules using 4 electrons from cytochrome c in the IMS and 4 protons from the mitochondrial matrix. The protein is Cytochrome c oxidase subunit 2 (COX2) of Candida glabrata (strain ATCC 2001 / BCRC 20586 / JCM 3761 / NBRC 0622 / NRRL Y-65 / CBS 138) (Yeast).